Reading from the N-terminus, the 272-residue chain is 5'-nucleotidase SurE (272 aa).

A divalent metal cation-binding residues include aspartate 8, aspartate 9, serine 39, and asparagine 96.

Belongs to the SurE nucleotidase family. It depends on a divalent metal cation as a cofactor.

The protein resides in the cytoplasm. The catalysed reaction is a ribonucleoside 5'-phosphate + H2O = a ribonucleoside + phosphate. Nucleotidase that shows phosphatase activity on nucleoside 5'-monophosphates. The protein is 5'-nucleotidase SurE of Heliobacterium modesticaldum (strain ATCC 51547 / Ice1).